The following is a 65-amino-acid chain: Putative primary metabolism protein prl65 (65 aa).

The interval 1–25 (MTKYSKGNKVEYHPIGGPSGTSTST) is disordered.

May play a role in primary metabolism. This chain is Putative primary metabolism protein prl65, found in Schizosaccharomyces pombe (strain 972 / ATCC 24843) (Fission yeast).